The following is a 285-amino-acid chain: 2-dehydro-3-deoxyphosphooctonate aldolase (285 aa).

It belongs to the KdsA family.

It is found in the cytoplasm. The catalysed reaction is D-arabinose 5-phosphate + phosphoenolpyruvate + H2O = 3-deoxy-alpha-D-manno-2-octulosonate-8-phosphate + phosphate. Its pathway is carbohydrate biosynthesis; 3-deoxy-D-manno-octulosonate biosynthesis; 3-deoxy-D-manno-octulosonate from D-ribulose 5-phosphate: step 2/3. It functions in the pathway bacterial outer membrane biogenesis; lipopolysaccharide biosynthesis. This Acidovorax sp. (strain JS42) protein is 2-dehydro-3-deoxyphosphooctonate aldolase.